The primary structure comprises 428 residues: Adenylosuccinate synthetase (428 aa).

Residues 12 to 18 (GDEGKGK) and 40 to 42 (GHT) each bind GTP. The active-site Proton acceptor is the aspartate 13. Residues aspartate 13 and glycine 40 each coordinate Mg(2+). Residues 13 to 16 (DEGK), 38 to 41 (NAGH), threonine 130, arginine 144, glutamine 225, threonine 240, and arginine 304 contribute to the IMP site. Histidine 41 (proton donor) is an active-site residue. Position 300–306 (300–306 (VTTGRAR)) interacts with substrate. GTP-binding positions include arginine 306, 332–334 (KID), and 414–416 (SVG).

The protein belongs to the adenylosuccinate synthetase family. As to quaternary structure, homodimer. Mg(2+) serves as cofactor.

It is found in the cytoplasm. The catalysed reaction is IMP + L-aspartate + GTP = N(6)-(1,2-dicarboxyethyl)-AMP + GDP + phosphate + 2 H(+). The protein operates within purine metabolism; AMP biosynthesis via de novo pathway; AMP from IMP: step 1/2. Plays an important role in the de novo pathway of purine nucleotide biosynthesis. Catalyzes the first committed step in the biosynthesis of AMP from IMP. This chain is Adenylosuccinate synthetase, found in Clostridium botulinum (strain ATCC 19397 / Type A).